The sequence spans 312 residues: tRNA dimethylallyltransferase (312 aa).

Position 11 to 18 (Gly11 to Ser18) interacts with ATP. Thr13 to Ser18 contributes to the substrate binding site. Interaction with substrate tRNA stretches follow at residues Asp36–Thr39, Gln160–Arg164, and Arg243–Arg248.

It belongs to the IPP transferase family. As to quaternary structure, monomer. The cofactor is Mg(2+).

The enzyme catalyses adenosine(37) in tRNA + dimethylallyl diphosphate = N(6)-dimethylallyladenosine(37) in tRNA + diphosphate. Catalyzes the transfer of a dimethylallyl group onto the adenine at position 37 in tRNAs that read codons beginning with uridine, leading to the formation of N6-(dimethylallyl)adenosine (i(6)A). This is tRNA dimethylallyltransferase from Bordetella avium (strain 197N).